Here is a 50-residue protein sequence, read N- to C-terminus: Large ribosomal subunit protein bL33 (50 aa).

The protein belongs to the bacterial ribosomal protein bL33 family.

The chain is Large ribosomal subunit protein bL33 from Fusobacterium nucleatum subsp. nucleatum (strain ATCC 25586 / DSM 15643 / BCRC 10681 / CIP 101130 / JCM 8532 / KCTC 2640 / LMG 13131 / VPI 4355).